Here is an 80-residue protein sequence, read N- to C-terminus: Cell division activator CedA (80 aa).

The protein belongs to the CedA family.

Its function is as follows. Activates the cell division inhibited by chromosomal DNA over-replication. The polypeptide is Cell division activator CedA (Escherichia coli (strain SMS-3-5 / SECEC)).